Consider the following 215-residue polypeptide: Cytokinin riboside 5'-monophosphate phosphoribohydrolase LOG4 (215 aa).

Substrate is bound by residues Glu84, 102-103, 119-125, and Thr131; these read RK and GYGTLEE.

Belongs to the LOG family. In terms of tissue distribution, expressed in roots and shoots. Detected in root procambium, lateral root primordia, vascular tissues of cotyledons, leaves and stems, shoot apical meristem, axillary buds, young inflorescences, fruit abscission zones and basal part of ovules.

The protein localises to the cytoplasm. Its subcellular location is the nucleus. The catalysed reaction is N(6)-(dimethylallyl)adenosine 5'-phosphate + H2O = N(6)-dimethylallyladenine + D-ribose 5-phosphate. It catalyses the reaction 9-ribosyl-trans-zeatin 5'-phosphate + H2O = trans-zeatin + D-ribose 5-phosphate. In terms of biological role, cytokinin-activating enzyme working in the direct activation pathway. Phosphoribohydrolase that converts inactive cytokinin nucleotides to the biologically active free-base forms. In Arabidopsis thaliana (Mouse-ear cress), this protein is Cytokinin riboside 5'-monophosphate phosphoribohydrolase LOG4 (LOG4).